A 264-amino-acid chain; its full sequence is S-adenosylmethionine decarboxylase proenzyme (264 aa).

Ser-112 functions as the Schiff-base intermediate with substrate; via pyruvic acid in the catalytic mechanism. Ser-112 is modified (pyruvic acid (Ser); by autocatalysis). The active-site Proton acceptor; for processing activity is His-117. The active-site Proton donor; for catalytic activity is the Cys-140.

It belongs to the prokaryotic AdoMetDC family. Type 2 subfamily. In terms of assembly, heterooctamer of four alpha and four beta chains arranged as a tetramer of alpha/beta heterodimers. Pyruvate is required as a cofactor. In terms of processing, is synthesized initially as an inactive proenzyme. Formation of the active enzyme involves a self-maturation process in which the active site pyruvoyl group is generated from an internal serine residue via an autocatalytic post-translational modification. Two non-identical subunits are generated from the proenzyme in this reaction, and the pyruvate is formed at the N-terminus of the alpha chain, which is derived from the carboxyl end of the proenzyme. The post-translation cleavage follows an unusual pathway, termed non-hydrolytic serinolysis, in which the side chain hydroxyl group of the serine supplies its oxygen atom to form the C-terminus of the beta chain, while the remainder of the serine residue undergoes an oxidative deamination to produce ammonia and the pyruvoyl group blocking the N-terminus of the alpha chain.

It catalyses the reaction S-adenosyl-L-methionine + H(+) = S-adenosyl 3-(methylsulfanyl)propylamine + CO2. The protein operates within amine and polyamine biosynthesis; S-adenosylmethioninamine biosynthesis; S-adenosylmethioninamine from S-adenosyl-L-methionine: step 1/1. In terms of biological role, catalyzes the decarboxylation of S-adenosylmethionine to S-adenosylmethioninamine (dcAdoMet), the propylamine donor required for the synthesis of the polyamines spermine and spermidine from the diamine putrescine. The sequence is that of S-adenosylmethionine decarboxylase proenzyme from Escherichia coli O127:H6 (strain E2348/69 / EPEC).